We begin with the raw amino-acid sequence, 379 residues long: Cytochrome b (379 aa).

4 helical membrane-spanning segments follow: residues 33 to 53, 77 to 98, 113 to 133, and 178 to 198; these read FGSL…FLAM, WLIR…FIHV, WNIG…GYVL, and FFAF…VHLL. Positions 83 and 97 each coordinate heme b. Heme b is bound by residues histidine 182 and histidine 196. Histidine 201 contributes to the a ubiquinone binding site. 4 helical membrane-spanning segments follow: residues 226–246, 288–308, 320–340, and 347–367; these read TKDL…VLFF, LGGV…PLLN, VTQV…WIGG, and FTTI…ILIP.

It belongs to the cytochrome b family. As to quaternary structure, the cytochrome bc1 complex contains 11 subunits: 3 respiratory subunits (MT-CYB, CYC1 and UQCRFS1), 2 core proteins (UQCRC1 and UQCRC2) and 6 low-molecular weight proteins (UQCRH/QCR6, UQCRB/QCR7, UQCRQ/QCR8, UQCR10/QCR9, UQCR11/QCR10 and a cleavage product of UQCRFS1). This cytochrome bc1 complex then forms a dimer. Heme b serves as cofactor.

It localises to the mitochondrion inner membrane. Component of the ubiquinol-cytochrome c reductase complex (complex III or cytochrome b-c1 complex) that is part of the mitochondrial respiratory chain. The b-c1 complex mediates electron transfer from ubiquinol to cytochrome c. Contributes to the generation of a proton gradient across the mitochondrial membrane that is then used for ATP synthesis. This Akodon cursor (Cursor grass mouse) protein is Cytochrome b (MT-CYB).